The sequence spans 303 residues: Flavin-dependent thymidylate synthase (303 aa).

The ThyX domain maps to Gly-41 to Tyr-258. FAD contacts are provided by residues Ser-95, Arg-118 to Arg-120, and Glu-126. DUMP is bound by residues Gln-115 to Arg-118, Glu-126 to Arg-130, and Arg-197. The ThyX motif signature appears at Arg-118 to Ser-128. Residues Asp-213–His-215 and His-219 contribute to the FAD site. Residue Arg-224 coordinates dUMP. The active-site Involved in ionization of N3 of dUMP, leading to its activation is Arg-224.

Belongs to the thymidylate synthase ThyX family. Homotetramer. Requires FAD as cofactor.

The enzyme catalyses dUMP + (6R)-5,10-methylene-5,6,7,8-tetrahydrofolate + NADPH + H(+) = dTMP + (6S)-5,6,7,8-tetrahydrofolate + NADP(+). Its pathway is pyrimidine metabolism; dTTP biosynthesis. Functionally, catalyzes the reductive methylation of 2'-deoxyuridine-5'-monophosphate (dUMP) to 2'-deoxythymidine-5'-monophosphate (dTMP) while utilizing 5,10-methylenetetrahydrofolate (mTHF) as the methyl donor, and NADPH and FADH(2) as the reductant. The polypeptide is Flavin-dependent thymidylate synthase (thyA) (Dictyostelium discoideum (Social amoeba)).